A 99-amino-acid polypeptide reads, in one-letter code: MTKADIIESVYEKVGFSKKEAAEIVEMVFDTIKETLERGEKIKISGFGNFIVREKKSRVGRNPQTGEEIEISARRVLTFRPSQVLKNALNLSDMVQPPV.

This sequence belongs to the bacterial histone-like protein family. As to quaternary structure, heterodimer of an alpha and a beta chain.

In terms of biological role, this protein is one of the two subunits of integration host factor, a specific DNA-binding protein that functions in genetic recombination as well as in transcriptional and translational control. The chain is Integration host factor subunit alpha from Anaeromyxobacter sp. (strain Fw109-5).